Consider the following 144-residue polypeptide: MDKLVPDVFKNKISDIIIEDDFDKENLVQETIACIEFDNFECKFECYKFQSSKSDSPESDISHNINIYTPIIYDYQNYQIDNSAVDILNQLNLKNNTFNRKMLFVLIHNFTMRVTDLCGYSIGLSEFNCDKIDKIKKKIQILVD.

The protein belongs to the mimivirus L885/R898 family.

This is an uncharacterized protein from Acanthamoeba polyphaga (Amoeba).